The primary structure comprises 37 residues: MKVRPSVKPICEKCKVIKRKGRVMVICENPKHKQKQG.

Belongs to the bacterial ribosomal protein bL36 family.

The protein is Large ribosomal subunit protein bL36 of Clostridium perfringens (strain ATCC 13124 / DSM 756 / JCM 1290 / NCIMB 6125 / NCTC 8237 / Type A).